The following is a 445-amino-acid chain: Chromosome partition protein MukF (445 aa).

The segment at 212-240 (LDETSGNLRELQDTLNAAGDKLQEQLLRI) is leucine-zipper.

Belongs to the MukF family. As to quaternary structure, interacts, and probably forms a ternary complex, with MukE and MukB via its C-terminal region. The complex formation is stimulated by calcium or magnesium. It is required for an interaction between MukE and MukB.

It is found in the cytoplasm. Its subcellular location is the nucleoid. Involved in chromosome condensation, segregation and cell cycle progression. May participate in facilitating chromosome segregation by condensation DNA from both sides of a centrally located replisome during cell division. Not required for mini-F plasmid partitioning. Probably acts via its interaction with MukB and MukE. Overexpression results in anucleate cells. It has a calcium binding activity. This Mannheimia succiniciproducens (strain KCTC 0769BP / MBEL55E) protein is Chromosome partition protein MukF.